The chain runs to 69 residues: DNA-directed RNA polymerase subunit epsilon (69 aa).

This sequence belongs to the RNA polymerase subunit epsilon family. As to quaternary structure, RNAP is composed of a core of 2 alpha, a beta and a beta' subunit. The core is associated with a delta subunit, and at least one of epsilon or omega. When a sigma factor is associated with the core the holoenzyme is formed, which can initiate transcription.

The catalysed reaction is RNA(n) + a ribonucleoside 5'-triphosphate = RNA(n+1) + diphosphate. In terms of biological role, a non-essential component of RNA polymerase (RNAP). The protein is DNA-directed RNA polymerase subunit epsilon of Listeria monocytogenes serotype 4b (strain CLIP80459).